Reading from the N-terminus, the 380-residue chain is Actinidain (380 aa).

Residues 1 to 24 (MGLPKSFVSMSLLFFSTLLILSLA) form the signal peptide. Residues 25–126 (FNAKNLTQRT…NRYEPRVGQV (102 aa)) constitute a propeptide, activation peptide. Asparagine 29, asparagine 81, and asparagine 111 each carry an N-linked (GlcNAc...) asparagine glycan. 3 disulfides stabilise this stretch: cysteine 148–cysteine 191, cysteine 182–cysteine 224, and cysteine 282–cysteine 332. Residue cysteine 151 is part of the active site. Residues histidine 288 and asparagine 308 contribute to the active site.

The protein belongs to the peptidase C1 family. As to expression, fruit, present in small cells of the outer pericarp of mature fruit, but not large cells.

The enzyme catalyses Specificity close to that of papain.. Its function is as follows. Cysteine protease responsible for the cleavage of kiwellin into kissper and KiTH. The sequence is that of Actinidain from Actinidia deliciosa (Kiwi).